The chain runs to 156 residues: Small ribosomal subunit protein uS7 (156 aa).

This sequence belongs to the universal ribosomal protein uS7 family. As to quaternary structure, part of the 30S ribosomal subunit. Contacts proteins S9 and S11.

In terms of biological role, one of the primary rRNA binding proteins, it binds directly to 16S rRNA where it nucleates assembly of the head domain of the 30S subunit. Is located at the subunit interface close to the decoding center, probably blocks exit of the E-site tRNA. This is Small ribosomal subunit protein uS7 from Pseudomonas fluorescens (strain ATCC BAA-477 / NRRL B-23932 / Pf-5).